Consider the following 200-residue polypeptide: Small ribosomal subunit protein uS4 (200 aa).

One can recognise an S4 RNA-binding domain in the interval 91 to 150 (TRLDNVVYRLGITPTRRSARQLVSHKHITVNGKIVNIPSYALKVGDIIGLTEKTKSSNAI).

It belongs to the universal ribosomal protein uS4 family. Part of the 30S ribosomal subunit. Contacts protein S5. The interaction surface between S4 and S5 is involved in control of translational fidelity.

One of the primary rRNA binding proteins, it binds directly to 16S rRNA where it nucleates assembly of the body of the 30S subunit. In terms of biological role, with S5 and S12 plays an important role in translational accuracy. In Amoebophilus asiaticus (strain 5a2), this protein is Small ribosomal subunit protein uS4.